A 1396-amino-acid chain; its full sequence is DNA ligase 6 (1396 aa).

Disordered regions lie at residues 441–464 and 562–599; these read KNAC…DTTP and MNLT…GPGQ. 2 short sequence motifs (nuclear localization signal) span residues 572–579 and 886–893; these read GKRGKSSG and LRKISVQT. E1037 serves as a coordination point for ATP. K1039 acts as the N6-AMP-lysine intermediate in catalysis. 4 residues coordinate ATP: R1044, R1060, E1092, and F1136. E1092 provides a ligand contact to Mg(2+). Position 1207 (E1207) interacts with Mg(2+). K1212, R1225, and K1231 together coordinate ATP.

Belongs to the ATP-dependent DNA ligase family. Mg(2+) is required as a cofactor. Mostly expressed in buds and flowers, and, to a lower extent, in stems, leaves, siliques and seeds.

The protein resides in the nucleus. It catalyses the reaction ATP + (deoxyribonucleotide)n-3'-hydroxyl + 5'-phospho-(deoxyribonucleotide)m = (deoxyribonucleotide)n+m + AMP + diphosphate.. Its function is as follows. DNA ligase that seals nicks in double-stranded DNA during DNA replication, DNA recombination and DNA repair. Required to maintain seed viability (e.g. longevity and storability) and during seed germination, probably by repairing DNA damage accumulated during seed development, storage and/or imbibition. Facilitates seed germination in cold conditions (2 degrees Celsius) and under oxidative stress (e.g. menadione, a genotoxic agent). Involved in repair of X-ray-induced damage. In terms of biological role, limits stable root transformation by A.tumefaciens T-DNA. This is DNA ligase 6 from Arabidopsis thaliana (Mouse-ear cress).